Here is a 393-residue protein sequence, read N- to C-terminus: Isocitrate dehydrogenase [NADP] (393 aa).

Residues Ser102, Asn104, Arg108, Arg118, and Arg142 each contribute to the D-threo-isocitrate site. Asp283 provides a ligand contact to Mg(2+).

Belongs to the isocitrate and isopropylmalate dehydrogenases family. Homodimer. The cofactor is Mg(2+). Mn(2+) serves as cofactor.

The enzyme catalyses D-threo-isocitrate + NADP(+) = 2-oxoglutarate + CO2 + NADPH. Functionally, catalyzes the oxidative decarboxylation of isocitrate to 2-oxoglutarate and carbon dioxide with the concomitant reduction of NADP(+). The sequence is that of Isocitrate dehydrogenase [NADP] (icd) from Streptococcus mutans serotype c (strain ATCC 700610 / UA159).